Consider the following 243-residue polypeptide: Carboxy-S-adenosyl-L-methionine synthase (243 aa).

Residues tyrosine 40, glycine 65 to serine 67, aspartate 90 to asparagine 91, aspartate 118 to isoleucine 119, asparagine 133, and arginine 200 each bind S-adenosyl-L-methionine.

This sequence belongs to the class I-like SAM-binding methyltransferase superfamily. Cx-SAM synthase family. Homodimer.

The enzyme catalyses prephenate + S-adenosyl-L-methionine = carboxy-S-adenosyl-L-methionine + 3-phenylpyruvate + H2O. Its function is as follows. Catalyzes the conversion of S-adenosyl-L-methionine (SAM) to carboxy-S-adenosyl-L-methionine (Cx-SAM). In Shewanella oneidensis (strain ATCC 700550 / JCM 31522 / CIP 106686 / LMG 19005 / NCIMB 14063 / MR-1), this protein is Carboxy-S-adenosyl-L-methionine synthase.